The following is a 235-amino-acid chain: Elongation factor Tu, chloroplastic (235 aa).

In terms of domain architecture, tr-type G spans 1–125 (KNMITGAAQM…AVDEYIPTPV (125 aa)). 47 to 50 (NKQD) contacts GTP.

Belongs to the TRAFAC class translation factor GTPase superfamily. Classic translation factor GTPase family. EF-Tu/EF-1A subfamily.

The protein resides in the plastid. It is found in the chloroplast. The enzyme catalyses GTP + H2O = GDP + phosphate + H(+). Its function is as follows. GTP hydrolase that promotes the GTP-dependent binding of aminoacyl-tRNA to the A-site of ribosomes during protein biosynthesis. This Gracilariopsis lemaneiformis (Red alga) protein is Elongation factor Tu, chloroplastic (tufA).